A 176-amino-acid polypeptide reads, in one-letter code: ATP-dependent protease subunit HslV (176 aa).

The active site involves T2. Na(+) is bound by residues G158, C161, and T164.

Belongs to the peptidase T1B family. HslV subfamily. In terms of assembly, a double ring-shaped homohexamer of HslV is capped on each side by a ring-shaped HslU homohexamer. The assembly of the HslU/HslV complex is dependent on binding of ATP.

The protein localises to the cytoplasm. The catalysed reaction is ATP-dependent cleavage of peptide bonds with broad specificity.. Its activity is regulated as follows. Allosterically activated by HslU binding. In terms of biological role, protease subunit of a proteasome-like degradation complex believed to be a general protein degrading machinery. The sequence is that of ATP-dependent protease subunit HslV from Pasteurella multocida (strain Pm70).